A 182-amino-acid chain; its full sequence is Ribosome maturation factor RimM (182 aa).

A PRC barrel domain is found at 103 to 182 (EGDYYWKDLM…TIEVDWDPGF (80 aa)).

It belongs to the RimM family. As to quaternary structure, binds ribosomal protein uS19.

The protein localises to the cytoplasm. Its function is as follows. An accessory protein needed during the final step in the assembly of 30S ribosomal subunit, possibly for assembly of the head region. Essential for efficient processing of 16S rRNA. May be needed both before and after RbfA during the maturation of 16S rRNA. It has affinity for free ribosomal 30S subunits but not for 70S ribosomes. This Klebsiella pneumoniae subsp. pneumoniae (strain ATCC 700721 / MGH 78578) protein is Ribosome maturation factor RimM.